A 136-amino-acid chain; its full sequence is Small ribosomal subunit protein uS8c (136 aa).

Belongs to the universal ribosomal protein uS8 family. As to quaternary structure, part of the 30S ribosomal subunit.

The protein localises to the plastid. Its function is as follows. One of the primary rRNA binding proteins, it binds directly to 16S rRNA central domain where it helps coordinate assembly of the platform of the 30S subunit. The sequence is that of Small ribosomal subunit protein uS8c (rps8) from Helicosporidium sp. subsp. Simulium jonesii (Green alga).